A 213-amino-acid polypeptide reads, in one-letter code: Large ribosomal subunit protein uL1 (213 aa).

The protein belongs to the universal ribosomal protein uL1 family. In terms of assembly, part of the 50S ribosomal subunit.

In terms of biological role, binds directly to 23S rRNA. Probably involved in E site tRNA release. Its function is as follows. Protein L1 is also a translational repressor protein, it controls the translation of its operon by binding to its mRNA. The protein is Large ribosomal subunit protein uL1 of Methanoculleus marisnigri (strain ATCC 35101 / DSM 1498 / JR1).